Consider the following 363-residue polypeptide: MIIDTPEVQDINSFSRFESLQEIYGIVWMLVPILTLVVGITIGVLVIVWLEREISAGIQQRIGPEYAGPFGILQALADGTKLLLKENLLPSRGDSPLFSIGPSMAVISILLSYSVIPFSYRLVLADLNVGVFLWIAISSIAPIGLLMSGYGSNNKYSFLGGLRAAAQSISYEIPLTLCVLSISLLSNSSSTVDIIEAQSKYGFWGWNLWRQPIGFLIFLISSLAECERLPFDLPEAEEELVAGYQTEYSGIKFAFFYITSYFNLLVSSLFVTILYLGGWNMSIPYIDFLPLFEINNVGGIFRTTTELFITLAKTFFFLFISITTRWTLPRLRMDQLLNLGWKFLLPISLGNLLLTTSSQLLSL.

7 helical membrane passes run 30-50 (LVPI…IVWL), 98-118 (FSIG…VIPF), 129-149 (VGVF…LMSG), 165-185 (AAQS…ISLL), 253-273 (FAFF…FVTI), 303-323 (TTTE…ISIT), and 336-356 (LLNL…LLTT).

Belongs to the complex I subunit 1 family. NDH is composed of at least 16 different subunits, 5 of which are encoded in the nucleus.

The protein localises to the plastid. It localises to the chloroplast thylakoid membrane. It catalyses the reaction a plastoquinone + NADH + (n+1) H(+)(in) = a plastoquinol + NAD(+) + n H(+)(out). The catalysed reaction is a plastoquinone + NADPH + (n+1) H(+)(in) = a plastoquinol + NADP(+) + n H(+)(out). Its function is as follows. NDH shuttles electrons from NAD(P)H:plastoquinone, via FMN and iron-sulfur (Fe-S) centers, to quinones in the photosynthetic chain and possibly in a chloroplast respiratory chain. The immediate electron acceptor for the enzyme in this species is believed to be plastoquinone. Couples the redox reaction to proton translocation, and thus conserves the redox energy in a proton gradient. This Pelargonium hortorum (Common geranium) protein is NAD(P)H-quinone oxidoreductase subunit 1, chloroplastic.